We begin with the raw amino-acid sequence, 554 residues long: Glucose-6-phosphate isomerase (554 aa).

Glutamate 358 (proton donor) is an active-site residue. Residues histidine 389 and lysine 515 contribute to the active site. The span at 527–540 shows a compositional bias: polar residues; the sequence is ANNSPAPQSDSSTD. A disordered region spans residues 527–554; it reads ANNSPAPQSDSSTDALVRRYRSERGRTS. Residues 542 to 554 show a composition bias toward basic and acidic residues; that stretch reads LVRRYRSERGRTS.

The protein belongs to the GPI family.

Its subcellular location is the cytoplasm. It carries out the reaction alpha-D-glucose 6-phosphate = beta-D-fructose 6-phosphate. Its pathway is carbohydrate biosynthesis; gluconeogenesis. It functions in the pathway carbohydrate degradation; glycolysis; D-glyceraldehyde 3-phosphate and glycerone phosphate from D-glucose: step 2/4. Its function is as follows. Catalyzes the reversible isomerization of glucose-6-phosphate to fructose-6-phosphate. This is Glucose-6-phosphate isomerase from Mycolicibacterium paratuberculosis (strain ATCC BAA-968 / K-10) (Mycobacterium paratuberculosis).